The following is a 186-amino-acid chain: Adenine phosphoribosyltransferase (186 aa).

Belongs to the purine/pyrimidine phosphoribosyltransferase family. As to quaternary structure, homodimer.

The protein resides in the cytoplasm. The catalysed reaction is AMP + diphosphate = 5-phospho-alpha-D-ribose 1-diphosphate + adenine. It participates in purine metabolism; AMP biosynthesis via salvage pathway; AMP from adenine: step 1/1. Functionally, catalyzes a salvage reaction resulting in the formation of AMP, that is energically less costly than de novo synthesis. The chain is Adenine phosphoribosyltransferase from Xanthomonas axonopodis pv. citri (strain 306).